We begin with the raw amino-acid sequence, 744 residues long: Prestin (744 aa).

The Cytoplasmic portion of the chain corresponds to 1–75; the sequence is MDHAEENEIP…PITKWLPAYK (75 aa). The helical transmembrane segment at 76–105 threads the bilayer; it reads FKEYVLGDLVSGISTGVLQLPQGLAFAMLA. Residues 106–108 lie on the Extracellular side of the membrane; that stretch reads AVP. Residues 109–126 traverse the membrane as a helical segment; it reads PVFGLYSSFYPVIMYCFF. Over 127 to 137 the chain is Cytoplasmic; the sequence is GTSRHISIGPF. The helical transmembrane segment at 138–151 threads the bilayer; sequence AVISLMIGGVAVRL. The Extracellular segment spans residues 152–168; that stretch reads VPDDIVIPGGVNATNGT. The Involved in motor function signature appears at 158–168; sequence IPGGVNATNGT. Residues Asn-163 and Asn-166 are each glycosylated (N-linked (GlcNAc...) asparagine). A helical membrane pass occupies residues 169-196; the sequence is EARDALRVKVAMSVTLLSGIIQFCLGVC. The Cytoplasmic portion of the chain corresponds to 197 to 206; the sequence is RFGFVAIYLT. A helical membrane pass occupies residues 207–230; the sequence is EPLVRGFTTAAAVHVFTSMLKYLF. Over 231–241 the chain is Extracellular; sequence GVKTKRYSGIF. Residues 242–253 constitute an intramembrane region (helical); sequence SVVYSTVAVLQN. Topologically, residues 254–258 are extracellular; sequence VKNLN. The chain crosses the membrane as a helical span at residues 259 to 282; it reads VCSLGVGLMVFGLLLGGKEFNERF. Topologically, residues 283-291 are cytoplasmic; the sequence is KEKLPAPIP. The helical transmembrane segment at 292-307 threads the bilayer; the sequence is LEFFAVVMGTGISAGF. The Extracellular segment spans residues 308 to 332; sequence NLHESYSVDVVGTLPLGLLPPANPD. The chain crosses the membrane as a helical span at residues 333–367; the sequence is TSLFHLVYVDAIAIAIVGFSVTISMAKTLANKHGY. The Cytoplasmic portion of the chain corresponds to 368–370; sequence QVD. Residues 371–388 form a helical membrane-spanning segment; the sequence is GNQELIALGICNSIGSLF. Residues 389–396 are Extracellular-facing; it reads QTFSISCS. A helical transmembrane segment spans residues 397-406; sequence LSRSLVQEGT. A salicylate-binding site is contributed by Ser-398. Residues 407-410 are Cytoplasmic-facing; the sequence is GGKT. The chain crosses the membrane as a helical span at residues 411 to 432; it reads QLAGCLASLMILLVILATGFLF. The Extracellular portion of the chain corresponds to 433–436; it reads ESLP. Residues 437 to 464 form a helical membrane-spanning segment; that stretch reads QAVLSAIVIVNLKGMFMQFSDLPFFWRT. Residue Ser-465 is a topological domain, cytoplasmic. The chain crosses the membrane as a helical span at residues 466–481; it reads KIELTIWLTTFVSSLF. The Extracellular segment spans residues 482 to 483; that stretch reads LG. A helical transmembrane segment spans residues 484 to 504; the sequence is LDYGLITAVIIALLTVIYRTQ. An extended region for STAS domain region spans residues 505-718; the sequence is SPSYKVLGQL…AVLGSQVREA (214 aa). Residues 505–744 lie on the Cytoplasmic side of the membrane; that stretch reads SPSYKVLGQL…PNATPTTPEA (240 aa). The region spanning 525 to 713 is the STAS domain; sequence AYEEVKEIPG…HSIHDAVLGS (189 aa). The segment at 720–744 is disordered; the sequence is AEQEATASLPQEDMEPNATPTTPEA.

Belongs to the SLC26A/SulP transporter (TC 2.A.53) family. As to quaternary structure, homodimer. Interacts (via STAS domain) with CALM; this interaction is calcium-dependent and the STAS domain interacts with only one lobe of CALM which is an elongated conformation. Interacts with MYH1. As to expression, expressed in the outer hair cells (OHC) of the organ of Corti of the inner ear. Also weak expression in brain and testis. Very weakly expressed in heart, spleen, muscle and lactating mammary glands. Expressed in cardiac myocytes (at protein level), both in the surface sarcolemma and along the t-tubule. Weakly expressed in skeletal muscle cells (at protein level).

It is found in the lateral cell membrane. The catalysed reaction is 2 hydrogencarbonate(in) + chloride(out) = 2 hydrogencarbonate(out) + chloride(in). Functionally, voltage-sensitive motor protein that drives outer hair cell (OHC) electromotility (eM) and participates in sound amplification in the hearing organ. Converts changes in the transmembrane electric potential into mechanical displacements resulting in the coupling of its expansion to movement of a charged voltage sensor across the lipid membrane. The nature of the voltage sensor is not completely clear, and two models compete. In the first model, acts as an incomplete transporter where intracellular chloride anion acts as extrinsic voltage sensor that drives conformational change in the protein which is sufficient to produce a length change in the plane of the membrane and hence in the length of the OHC. The second model in which multiple charged amino acid residues are distributed at the intracellular and extracellular membrane interfaces that form an intrinsic voltage sensor, whose movement produces the non-linear capacitance (NLC). However, the effective voltage sensor may be the result of a hybrid voltage sensor, assembled from intrinsic charge (charged residues) and extrinsic charge (bound anion). Notably, binding of anions to the anion-binding pocket partially neutralizes the intrinsic positive charge rather than to form an electrically negative sensor, therefore remaining charge may serve as voltage sensor that, after depolarization, moves from down (expanded state) to up (contracted) conformation, which is accompanied by an eccentric contraction of the intermembrane cross-sectional area of the protein as well as a major increase in the hydrophobic thickness of the protein having as consequences the plasma membrane thickening and the cell contraction after membrane depolarization. The anion-binding pocket transits from the inward-open (Down) state, where it is exposed toward the intracellular solvent in the absence of anion, to the occluded (Up) state upon anion binding. Salicylate competes for the anion-binding site and inhibits the voltage-sensor movement, and therefore inhibits the charge transfer and electromotility by displacing Cl(-) from the anion-binding site and by preventing the structural transitions to the contracted state. In addition, can act as a weak Cl(-)/HCO3(-) antiporter across the cell membrane and so regulate the intracellular pH of the outer hair cells (OHCs), while firstly found as being unable to mediate electrogenic anion transport. Moreover, supports a role in cardiac mechanical amplification serving as an elastic element to enhance the actomyosin- based sarcomere contraction system. This is Prestin from Mus musculus (Mouse).